We begin with the raw amino-acid sequence, 430 residues long: Probable FAD-dependent monooxygenase (430 aa).

Positions methionine 1–alanine 23 are cleaved as a signal peptide. Histidine 9–glutamate 37 contributes to the FAD binding site. Residues asparagine 130 and asparagine 151 are each glycosylated (N-linked (GlcNAc...) asparagine). Leucine 307 to aspartate 330 lines the FAD pocket.

FAD is required as a cofactor.

In Arthroderma benhamiae (strain ATCC MYA-4681 / CBS 112371) (Trichophyton mentagrophytes), this protein is Probable FAD-dependent monooxygenase.